We begin with the raw amino-acid sequence, 704 residues long: Polyribonucleotide nucleotidyltransferase (704 aa).

D488 and D494 together coordinate Mg(2+). The region spanning P555 to I614 is the KH domain. In terms of domain architecture, S1 motif spans G624–K692.

Belongs to the polyribonucleotide nucleotidyltransferase family. Component of the RNA degradosome, which is a multiprotein complex involved in RNA processing and mRNA degradation. Mg(2+) is required as a cofactor.

It localises to the cytoplasm. It catalyses the reaction RNA(n+1) + phosphate = RNA(n) + a ribonucleoside 5'-diphosphate. Functionally, involved in mRNA degradation. Catalyzes the phosphorolysis of single-stranded polyribonucleotides processively in the 3'- to 5'-direction. The protein is Polyribonucleotide nucleotidyltransferase of Shewanella pealeana (strain ATCC 700345 / ANG-SQ1).